We begin with the raw amino-acid sequence, 460 residues long: DNA repair protein RadA (460 aa).

A C4-type zinc finger spans residues 11 to 28 (CNECGADYPRWQGQCSAC). 102–109 (GNPGAGKS) contacts ATP. The RadA KNRFG motif signature appears at 258-262 (KNRFG). A lon-protease-like region spans residues 357-460 (DVFVNVVGGV…ADALSVFDDL (104 aa)).

It belongs to the RecA family. RadA subfamily.

Functionally, DNA-dependent ATPase involved in processing of recombination intermediates, plays a role in repairing DNA breaks. Stimulates the branch migration of RecA-mediated strand transfer reactions, allowing the 3' invading strand to extend heteroduplex DNA faster. Binds ssDNA in the presence of ADP but not other nucleotides, has ATPase activity that is stimulated by ssDNA and various branched DNA structures, but inhibited by SSB. Does not have RecA's homology-searching function. The chain is DNA repair protein RadA from Salmonella typhimurium (strain LT2 / SGSC1412 / ATCC 700720).